We begin with the raw amino-acid sequence, 212 residues long: MSDTSIKQQSQLTSGDFTAAENPFELFAEWLAEADRSEPNDPNAMALATVDSDGLPDVRMVLMKGYDADGFVFYSHIASQKGRELTANPKAALLFHWKSLRRQVRIRGTVTPVSDAEADAYFATRPKQAQIGAWASKQSQPLESRFAFEQAIAKVAARYLIGEVPRPPGWSGWRITPSRVEFWHDRPFRLHDRIEFNRDTPAQPWTKTRLYP.

FMN contacts are provided by residues 59 to 64 (RMVLMK), 74 to 75 (YS), K81, and Q103. A substrate-binding site is contributed by K64. Substrate-binding residues include Y121 and R125. FMN is bound by residues 138-139 (QS) and W183. 189 to 191 (RLH) is a binding site for substrate. R193 lines the FMN pocket.

It belongs to the pyridoxamine 5'-phosphate oxidase family. In terms of assembly, homodimer. The cofactor is FMN.

It catalyses the reaction pyridoxamine 5'-phosphate + O2 + H2O = pyridoxal 5'-phosphate + H2O2 + NH4(+). The catalysed reaction is pyridoxine 5'-phosphate + O2 = pyridoxal 5'-phosphate + H2O2. The protein operates within cofactor metabolism; pyridoxal 5'-phosphate salvage; pyridoxal 5'-phosphate from pyridoxamine 5'-phosphate: step 1/1. It functions in the pathway cofactor metabolism; pyridoxal 5'-phosphate salvage; pyridoxal 5'-phosphate from pyridoxine 5'-phosphate: step 1/1. Its function is as follows. Catalyzes the oxidation of either pyridoxine 5'-phosphate (PNP) or pyridoxamine 5'-phosphate (PMP) into pyridoxal 5'-phosphate (PLP). This Rhodopseudomonas palustris (strain HaA2) protein is Pyridoxine/pyridoxamine 5'-phosphate oxidase.